A 426-amino-acid polypeptide reads, in one-letter code: Tyrosine--tRNA ligase (426 aa).

L-tyrosine is bound at residue Tyr-38. Residues 43-52 (PTADSLHIGS) carry the 'HIGH' region motif. L-tyrosine is bound by residues Tyr-176 and Gln-180. The 'KMSKS' region motif lies at 236 to 240 (KFGKT). Residue Lys-239 participates in ATP binding. The 68-residue stretch at 359 to 426 (QTIVEVLTQS…KKLFNLYIWK (68 aa)) folds into the S4 RNA-binding domain.

This sequence belongs to the class-I aminoacyl-tRNA synthetase family. TyrS type 1 subfamily. In terms of assembly, homodimer.

It is found in the cytoplasm. It carries out the reaction tRNA(Tyr) + L-tyrosine + ATP = L-tyrosyl-tRNA(Tyr) + AMP + diphosphate + H(+). Catalyzes the attachment of tyrosine to tRNA(Tyr) in a two-step reaction: tyrosine is first activated by ATP to form Tyr-AMP and then transferred to the acceptor end of tRNA(Tyr). This chain is Tyrosine--tRNA ligase, found in Aliivibrio salmonicida (strain LFI1238) (Vibrio salmonicida (strain LFI1238)).